Reading from the N-terminus, the 182-residue chain is Guanylate kinase (182 aa).

Residues Gly2–Gly180 form the Guanylate kinase-like domain. Residue Gly9 to Gly16 coordinates ATP.

The protein belongs to the guanylate kinase family.

It localises to the cytoplasm. The enzyme catalyses GMP + ATP = GDP + ADP. It carries out the reaction dZMP + ATP = dZDP + ADP. Its pathway is purine metabolism. In terms of biological role, essential for recycling GMP and indirectly, cGMP. (Microbial infection) Catalyzes the phosphorylation of dZMP to dZDP, when the bacterium is infected by a phage that produces the substrate for the synthesis of dZTP (2- amino-2'-deoxyadenosine 5'-triphosphate), which is then used by the phage as a DNA polymerase substrate. This chain is Guanylate kinase, found in Parasynechococcus marenigrum (strain WH8102).